Here is a 279-residue protein sequence, read N- to C-terminus: Bifunctional protein FolD 1 (279 aa).

NADP(+) is bound by residues Gly166–Ser168 and Ser191.

It belongs to the tetrahydrofolate dehydrogenase/cyclohydrolase family. In terms of assembly, homodimer.

It carries out the reaction (6R)-5,10-methylene-5,6,7,8-tetrahydrofolate + NADP(+) = (6R)-5,10-methenyltetrahydrofolate + NADPH. The catalysed reaction is (6R)-5,10-methenyltetrahydrofolate + H2O = (6R)-10-formyltetrahydrofolate + H(+). The protein operates within one-carbon metabolism; tetrahydrofolate interconversion. Functionally, catalyzes the oxidation of 5,10-methylenetetrahydrofolate to 5,10-methenyltetrahydrofolate and then the hydrolysis of 5,10-methenyltetrahydrofolate to 10-formyltetrahydrofolate. This Salinispora arenicola (strain CNS-205) protein is Bifunctional protein FolD 1.